A 925-amino-acid polypeptide reads, in one-letter code: MNRFRVSKFRHTEARPPRREAWLSDIRAGTAPSCRNHIKSSCSLITFNSDRPGVLGIVPLQGQGEDKRRVAHLGCHSDLVTDLDFSPFDDFLLATGSADRTVKLWRLPGPGQALPSAPGVVLGPEDLPVEVLQFHPTSDGILVSAAGTTVKVWDAAKQQPLTELEAHGDLVQSAVWSRDGALVGTACKDKQLRIFDPRTKPQASQSTQAHENSRDSRLAWTGTWEHFVSTGFNQMREHEVKLWDTRFFSSALASLTLDTSLGCLMPLLDPDSGLLVLAGKGKRQLYCYEVVPQQPALSPVTQCVLESVLRGAALVPRQALAVMSCEVLRVLQLSDTAIVPIGYHVPRKAVEFHEDLFPDTAGCVPATDPHSWWAGDNQQAQKVSLNPACRPHPSFTSCLVPPTEPLPDTAQPAVTETPVGDADASEGFSSPPSSLTSPSTPSSLGPTLSSTSGIGTGPSLRSLQSLLGPSSKFRHAQGTVLHRDSHITNLKGLNLTTPGESDGFCANKLRVAVPLLSSGGQVAVLELRKPGRLPDTALPTLQNGAAVTDLAWDPFDPHRLAVAGEDARIRLWRVPAEGLEEVLTVPETVLTGHMEKICSLRFHPLAADVLASSSYDLTVRIWDLQAGVDRLKLQGHQDQIFSLAWSPDGQQLATVCKDGRVRVYRPRSGPEPLQEGPGPKGGRGARIVWVCDGRCLLVSGFDSQSERQLLLYEAEALAGGPLAVLGLDVAPSTLVPSYEPRHWPGAPDWQGDARVFLYELLPESPFFMECNSFTSPDPHKGFVLLPKTECDVREVELMRCLRCASPPWSLWPSGCPESGKSSFQDDVFPDTAVSWEPVLSAEAWLQGANGQPWLLSLQPPDMSPVSQAPREAPARRAPSSAQYLEEKSDQQKKEELLNAMVAKLGNREDPLPQDSFEGVDEDEWD.

WD repeat units lie at residues 75-115, 124-163, 166-205, and 209-253; these read CHSD…QALP, PEDL…PLTE, AHGD…QASQ, and AHEN…SALA. 2 disordered regions span residues 196 to 216 and 399 to 465; these read DPRT…SRDS and LVPP…SLQS. The segment covering 201 to 210 has biased composition (polar residues); sequence PQASQSTQAH. The span at 429 to 460 shows a compositional bias: low complexity; sequence SSPPSSLTSPSTPSSLGPTLSSTSGIGTGPSL. Serine 462 and serine 465 each carry phosphoserine. Lysine 472 participates in a covalent cross-link: Glycyl lysine isopeptide (Lys-Gly) (interchain with G-Cter in ubiquitin). WD repeat units lie at residues 542-582, 592-632, and 635-674; these read QNGA…LEEV, GHME…DRLK, and GHQD…EPLQ. Residue lysine 680 forms a Glycyl lysine isopeptide (Lys-Gly) (interchain with G-Cter in ubiquitin) linkage. The stretch at 728–768 is one WD 8 repeat; the sequence is DVAPSTLVPSYEPRHWPGAPDWQGDARVFLYELLPESPFFM. The segment at 857–925 is disordered; that stretch reads LQPPDMSPVS…FEGVDEDEWD (69 aa). Low complexity predominate over residues 866 to 882; that stretch reads SQAPREAPARRAPSSAQ. A compositionally biased stretch (basic and acidic residues) spans 884–896; that stretch reads LEEKSDQQKKEEL. Serine 915 carries the post-translational modification Phosphoserine.

The protein belongs to the WD repeat coronin family. Interacts with clathrin adapter AP1 complex. This interaction takes place at Golgi membranes and not AP1-positive endosomal membranes. Interacts (when ubiquitinated at Lys-472) with EPS15. In terms of processing, the membrane-associated form is phosphorylated on tyrosine residues. Ubiquitinated via 'Lys-33'-linked ubiquitin chains by the BCR(KLHL20) E3 ubiquitin ligase complex: 'Lys-33'-linked ubiquitination promotes interaction with EPS15 and facilitates actin polymerization at the trans-Golgi network, thereby facilitating post-Golgi trafficking. Deubiquitinated by ZRANB1/TRABID.

Its subcellular location is the golgi apparatus membrane. It localises to the golgi apparatus. It is found in the trans-Golgi network. The protein resides in the cytoplasmic vesicle. The protein localises to the cytoplasm. Its subcellular location is the cytosol. Its function is as follows. F-actin regulator involved in anterograde Golgi to endosome transport: upon ubiquitination via 'Lys-33'-linked ubiquitin chains by the BCR(KLHL20) E3 ubiquitin ligase complex, interacts with EPS15 and localizes to the trans-Golgi network, where it promotes actin polymerization, thereby facilitating post-Golgi trafficking. May play a role in the maintenance of the Golgi apparatus morphology. The polypeptide is Coronin-7 (CORO7) (Pongo abelii (Sumatran orangutan)).